The primary structure comprises 41 residues: U3-theraphotoxin-Hs1a (41 aa).

3 disulfides stabilise this stretch: C2–C16, C9–C37, and C17–C40.

It belongs to the neurotoxin 14 (magi-1) family. 01 (HNTX-16) subfamily. As to expression, expressed by the venom gland.

Its subcellular location is the secreted. Functionally, intracerebroventricular injection paralyzes mice. Has no effect on voltage-gated sodium currents. The sequence is that of U3-theraphotoxin-Hs1a from Cyriopagopus schmidti (Chinese bird spider).